We begin with the raw amino-acid sequence, 192 residues long: Ion-translocating oxidoreductase complex subunit B (192 aa).

The segment at 1-26 (MEMIVIAVVALTLLALLFGMLLGYAS) is hydrophobic. The 4Fe-4S domain maps to 32–91 (EEDPVVDQVDELLPQSQCGQCGYPGCRPYAEAVANNGEQINRCVPGGEPVMQKIATLLNV). [4Fe-4S] cluster contacts are provided by C49, C52, C57, C74, C117, C120, C123, C127, C147, C150, C153, and C157. 2 4Fe-4S ferredoxin-type domains span residues 108–137 (MLAV…GATR) and 138–167 (AMHT…LRPA).

This sequence belongs to the 4Fe4S bacterial-type ferredoxin family. RnfB subfamily. As to quaternary structure, the complex is composed of six subunits: RnfA, RnfB, RnfC, RnfD, RnfE and RnfG. Requires [4Fe-4S] cluster as cofactor.

The protein resides in the cell inner membrane. Part of a membrane-bound complex that couples electron transfer with translocation of ions across the membrane. The polypeptide is Ion-translocating oxidoreductase complex subunit B (Cronobacter sakazakii (strain ATCC BAA-894) (Enterobacter sakazakii)).